A 248-amino-acid polypeptide reads, in one-letter code: Protein GrpE (248 aa).

Residues 229-248 (AAPKEDTLPAQENQSSPADS) form a disordered region. Residues 238 to 248 (AQENQSSPADS) are compositionally biased toward polar residues.

Belongs to the GrpE family. Homodimer.

The protein localises to the cytoplasm. Functionally, participates actively in the response to hyperosmotic and heat shock by preventing the aggregation of stress-denatured proteins, in association with DnaK and GrpE. It is the nucleotide exchange factor for DnaK and may function as a thermosensor. Unfolded proteins bind initially to DnaJ; upon interaction with the DnaJ-bound protein, DnaK hydrolyzes its bound ATP, resulting in the formation of a stable complex. GrpE releases ADP from DnaK; ATP binding to DnaK triggers the release of the substrate protein, thus completing the reaction cycle. Several rounds of ATP-dependent interactions between DnaJ, DnaK and GrpE are required for fully efficient folding. The sequence is that of Protein GrpE from Trichormus variabilis (strain ATCC 29413 / PCC 7937) (Anabaena variabilis).